The sequence spans 98 residues: Glutaredoxin 1 (98 aa).

The Glutaredoxin domain maps to 1–98; it reads MNKAILHAII…KLLEGQPKKD (98 aa). Cysteines 17 and 20 form a disulfide.

The protein belongs to the glutaredoxin family. Monomer.

The protein localises to the cytoplasm. Its function is as follows. Has a glutathione-disulfide oxidoreductase activity in the presence of NADPH and glutathione reductase. Reduces low molecular weight disulfides and proteins. This chain is Glutaredoxin 1 (grxC1), found in Rickettsia bellii (strain RML369-C).